A 285-amino-acid chain; its full sequence is Hydroxyethylthiazole kinase (285 aa).

Methionine 43 lines the substrate pocket. Positions 119 and 172 each coordinate ATP. Glycine 199 serves as a coordination point for substrate.

Belongs to the Thz kinase family. The cofactor is Mg(2+).

The enzyme catalyses 5-(2-hydroxyethyl)-4-methylthiazole + ATP = 4-methyl-5-(2-phosphooxyethyl)-thiazole + ADP + H(+). Its pathway is cofactor biosynthesis; thiamine diphosphate biosynthesis; 4-methyl-5-(2-phosphoethyl)-thiazole from 5-(2-hydroxyethyl)-4-methylthiazole: step 1/1. Functionally, catalyzes the phosphorylation of the hydroxyl group of 4-methyl-5-beta-hydroxyethylthiazole (THZ). This is Hydroxyethylthiazole kinase from Desulfovibrio desulfuricans (strain ATCC 27774 / DSM 6949 / MB).